Reading from the N-terminus, the 241-residue chain is Accessory protein p30II (241 aa).

2 short sequence motifs (nuclear localization signal) span residues 73-78 and 91-98; these read RRCRSR and GPRRSRPR. Low complexity-rich tracts occupy residues 79–100 and 107–136; these read CVSP…PRLS and PSST…TSRS. The interval 79-151 is disordered; that stretch reads CVSPRGGAFS…GKHRNSPADT (73 aa). The Mitochondrial targeting signal motif lies at 175–184; that stretch reads LRVWRLCTRR.

The protein belongs to the HTLV-1 accessory protein p30II family. In terms of assembly, p30II binds to the KIX domains of CREBBP and EP300.

It localises to the host nucleus. It is found in the host nucleolus. Its subcellular location is the host mitochondrion inner membrane. P30II is a multifunctional regulator that sequesters EP300/CREBBP and down-regulates CREB-responsive element (CRE) and Tax-responsive element (TRE) mediated transcription. Specifically binds and represses tax/rex mRNA nuclear export. Since Tax and Rex are positive regulators of viral gene expression, their inhibition by p30II reduces virion production, and allows the virus to escape the host immune surveillance and persist latently in an immune-competent host. Functionally, p13II increases mitochondrial permeability to monovalent cations, producing a rapid, membrane potential-dependent influx of potassium. This could involve a channel-forming activity. Interferes with cell proliferation and transformation and promotes apoptosis induced by ceramide and Fas ligand, probably using the Ras signaling. This Human T-cell leukemia virus 1 (strain Japan ATK-1 subtype A) (HTLV-1) protein is Accessory protein p30II.